The sequence spans 319 residues: MNPNYLDFEQPIADLEAKIQELRKASTGPAVNVETEVRALRDKLRVRTAQIFRDLSAWQVSQLARHPQRPYTLDYINTICDEFQELAGDRAYADDKAIVGGLGRIDGRPVVIIGHQKGRDTKTKVARNFGMPRPEGYRKALRLMKLAERFRLPLLTFIDTPGAYPGIGAEERGQSEAIARNLLEMAELKIPVICTVIGEGGSGGALAIGVGDRTLMLEYGTYSVISPEGCASILWKDAGKAKDAAEQLGLTARRLKDLSLVDKVIREPTGGAHRNPQQMGKRLKAVLLNELDALEKVPLETLLQQRYERLRSYGAYEGR.

A CoA carboxyltransferase C-terminal domain is found at 32 to 293; that stretch reads NVETEVRALR…KAVLLNELDA (262 aa).

Belongs to the AccA family. In terms of assembly, acetyl-CoA carboxylase is a heterohexamer composed of biotin carboxyl carrier protein (AccB), biotin carboxylase (AccC) and two subunits each of ACCase subunit alpha (AccA) and ACCase subunit beta (AccD).

It localises to the cytoplasm. It carries out the reaction N(6)-carboxybiotinyl-L-lysyl-[protein] + acetyl-CoA = N(6)-biotinyl-L-lysyl-[protein] + malonyl-CoA. It participates in lipid metabolism; malonyl-CoA biosynthesis; malonyl-CoA from acetyl-CoA: step 1/1. Its function is as follows. Component of the acetyl coenzyme A carboxylase (ACC) complex. First, biotin carboxylase catalyzes the carboxylation of biotin on its carrier protein (BCCP) and then the CO(2) group is transferred by the carboxyltransferase to acetyl-CoA to form malonyl-CoA. The protein is Acetyl-coenzyme A carboxylase carboxyl transferase subunit alpha of Xanthomonas oryzae pv. oryzae (strain MAFF 311018).